The following is a 64-amino-acid chain: Prokaryotic ubiquitin-like protein Pup (64 aa).

A disordered region spans residues 1-38 (MAQEQTKRGGGGGEDDDPTGSTAAGQERREKLTEETDD). Positions 21 to 58 (STAAGQERREKLTEETDDLLDEIDDVLEENAEDFVRAY) are ARC ATPase binding. The stretch at 23–52 (AAGQERREKLTEETDDLLDEIDDVLEENAE) forms a coiled coil. Gln64 carries the deamidated glutamine modification. Residue Gln64 forms an Isoglutamyl lysine isopeptide (Gln-Lys) (interchain with K-? in acceptor proteins) linkage.

This sequence belongs to the prokaryotic ubiquitin-like protein family. As to quaternary structure, strongly interacts with the proteasome-associated ATPase ARC through a hydrophobic interface; the interacting region of Pup lies in its C-terminal half. There is one Pup binding site per ARC hexamer ring. Post-translationally, is modified by deamidation of its C-terminal glutamine to glutamate by the deamidase Dop, a prerequisite to the subsequent pupylation process.

It functions in the pathway protein degradation; proteasomal Pup-dependent pathway. Functionally, protein modifier that is covalently attached to lysine residues of substrate proteins, thereby targeting them for proteasomal degradation. The tagging system is termed pupylation. The polypeptide is Prokaryotic ubiquitin-like protein Pup (Mycolicibacterium gilvum (strain PYR-GCK) (Mycobacterium gilvum (strain PYR-GCK))).